Consider the following 691-residue polypeptide: Elongation factor G (691 aa).

The tr-type G domain maps to 8–282 (ERVRNIGIAA…AVVDYLPAPV (275 aa)). Residues 17–24 (AHIDAGKT), 81–85 (DTPGH), and 135–138 (NKMD) contribute to the GTP site.

It belongs to the TRAFAC class translation factor GTPase superfamily. Classic translation factor GTPase family. EF-G/EF-2 subfamily.

It localises to the cytoplasm. Catalyzes the GTP-dependent ribosomal translocation step during translation elongation. During this step, the ribosome changes from the pre-translocational (PRE) to the post-translocational (POST) state as the newly formed A-site-bound peptidyl-tRNA and P-site-bound deacylated tRNA move to the P and E sites, respectively. Catalyzes the coordinated movement of the two tRNA molecules, the mRNA and conformational changes in the ribosome. The chain is Elongation factor G from Prochlorococcus marinus (strain AS9601).